The following is a 208-amino-acid chain: CASP-like protein 1D1 (208 aa).

The tract at residues 1–36 (MSSVDTEKPAPPPLETEAPPPPPPPPPPPPPPPPPP) is disordered. The Cytoplasmic portion of the chain corresponds to 1 to 41 (MSSVDTEKPAPPPLETEAPPPPPPPPPPPPPPPPPPAGYSA). Residues 9–36 (PAPPPLETEAPPPPPPPPPPPPPPPPPP) show a composition bias toward pro residues. The chain crosses the membrane as a helical span at residues 42–62 (LDVVLRILLLGSAVASVVVMV). The Extracellular portion of the chain corresponds to 63–89 (TSVQTKLIAVAGVPVLVSNKAKFQNSP). Residues 90–110 (AFIYFVAALSVVGLYSIITTL) traverse the membrane as a helical segment. The Cytoplasmic segment spans residues 111–133 (ASFIFISKPSCSTKTILHLAIWD). Residues 134 to 154 (VLMLGLAASATGTAGGVAYVG) form a helical membrane-spanning segment. The Extracellular segment spans residues 155–180 (LKGNSHVGWNKVCNTYDKFCRHVGGS). A helical transmembrane segment spans residues 181–201 (IAVALFASILLVLLVWLSLFT). At 202 to 208 (LYSRIRK) the chain is on the cytoplasmic side.

It belongs to the Casparian strip membrane proteins (CASP) family. In terms of assembly, homodimer and heterodimers.

The protein localises to the cell membrane. This Vitis vinifera (Grape) protein is CASP-like protein 1D1.